A 124-amino-acid chain; its full sequence is Fluoride-specific ion channel FluC (124 aa).

A run of 4 helical transmembrane segments spans residues 4 to 24 (VLYI…LSGW), 32 to 52 (AFPY…GLIM), 67 to 87 (IGLT…SYET), and 101 to 121 (ANVL…IIVA). Glycine 75 and threonine 78 together coordinate Na(+).

The protein belongs to the fluoride channel Fluc/FEX (TC 1.A.43) family.

It localises to the cell inner membrane. It carries out the reaction fluoride(in) = fluoride(out). With respect to regulation, na(+) is not transported, but it plays an essential structural role and its presence is essential for fluoride channel function. Its function is as follows. Fluoride-specific ion channel. Important for reducing fluoride concentration in the cell, thus reducing its toxicity. The protein is Fluoride-specific ion channel FluC of Geotalea uraniireducens (strain Rf4) (Geobacter uraniireducens).